We begin with the raw amino-acid sequence, 136 residues long: Large ribosomal subunit protein uL16c (136 aa).

Residues methionine 1–methionine 17 show a composition bias toward basic residues. A disordered region spans residues methionine 1–asparagine 25.

Belongs to the universal ribosomal protein uL16 family. In terms of assembly, part of the 50S ribosomal subunit.

The protein resides in the plastid. It localises to the chloroplast. This is Large ribosomal subunit protein uL16c from Anthoceros angustus (Hornwort).